The sequence spans 176 residues: Translation initiation factor IF-3 (176 aa).

Belongs to the IF-3 family. In terms of assembly, monomer.

It is found in the cytoplasm. Its function is as follows. IF-3 binds to the 30S ribosomal subunit and shifts the equilibrium between 70S ribosomes and their 50S and 30S subunits in favor of the free subunits, thus enhancing the availability of 30S subunits on which protein synthesis initiation begins. This is Translation initiation factor IF-3 from Streptococcus thermophilus (strain ATCC BAA-491 / LMD-9).